We begin with the raw amino-acid sequence, 420 residues long: Signal recognition particle receptor FtsY (420 aa).

The span at 28 to 62 (DLDRAMGKVAPDNKKTRDAKAAADARLAAEAEEAK) shows a compositional bias: basic and acidic residues. The tract at residues 28 to 118 (DLDRAMGKVA…PETPESVGSR (91 aa)) is disordered. A compositionally biased stretch (low complexity) spans 63-104 (AATAAEPAKSAESAKAEPAPAAQAEPEPAAAPKPESQPASKP). GTP is bound by residues 227 to 234 (GVNGTGKT), 310 to 314 (DTAGR), and 372 to 375 (SKLD).

This sequence belongs to the GTP-binding SRP family. FtsY subfamily. Part of the signal recognition particle protein translocation system, which is composed of SRP and FtsY.

The protein localises to the cell membrane. It is found in the cytoplasm. The enzyme catalyses GTP + H2O = GDP + phosphate + H(+). Its function is as follows. Involved in targeting and insertion of nascent membrane proteins into the cytoplasmic membrane. Acts as a receptor for the complex formed by the signal recognition particle (SRP) and the ribosome-nascent chain (RNC). The polypeptide is Signal recognition particle receptor FtsY (Bifidobacterium longum (strain NCC 2705)).